A 229-amino-acid chain; its full sequence is Sorting nexin-10A (229 aa).

The 118-residue stretch at 11–128 folds into the PX domain; that stretch reads FISVWVRDPQ…HLFLQSQLSI (118 aa). The a 1,2-diacyl-sn-glycero-3-phospho-(1D-myo-inositol-3-phosphate) site is built by R54 and R95.

This sequence belongs to the sorting nexin family.

The protein localises to the cytoplasm. It is found in the endosome membrane. It localises to the cytoskeleton. The protein resides in the microtubule organizing center. Its subcellular location is the centrosome. Probable phosphoinositide-binding protein involved in protein sorting and membrane trafficking in endosomes. May play a role in cilium biogenesis through regulation of the transport and the localization of proteins to the cilium. The chain is Sorting nexin-10A (snx10a) from Danio rerio (Zebrafish).